A 507-amino-acid polypeptide reads, in one-letter code: MAATEDGGEVDRGISGDALCRIVICNDASLRSQPVIYNPDFFVEKLRHENPEVFTELVVSNLTRLIDLPGTELAQLMGEVDPKLPGHNGAASSFFRSLNFLKRKEKGIVFGAPLTEEGIAQIYQLIDYLHKNLRTEGLFRIPGNSIRQQNLKDLLNSGMDIDVESGEFHPNDVATLLKMFLGELPEPLLTHRHYIAHLKIANLMLFDAKGNRTGVPDKERQIEALQLLFLLLPSPNRNLLKLLLDLLYQTARKQDRNKMSAHNLALMFAPHIIWPKNLTANDLQEHLIKLNNGVTFMIKHSQKLFKAPPYIREYARLHFSGSRTPASKDDLDLLPTRSPSEFHFLKHSKRSRLGSSPSSSTSLQEQTQQHTEEALKELFRHVHNMPDSAKKKRLIRQFNKNTPRTPVSDTQVPNGKKHVRSRTFSGMIKRKVLGSQMASEKKSRTITPQSADGSEYAKENLKYVSVDSPAVYFTRAKLKLSEDLQIRKEASSKSKKSHHKSTQETSI.

Positions 112–305 (APLTEEGIAQ…FMIKHSQKLF (194 aa)) constitute a Rho-GAP domain. Disordered stretches follow at residues 344–371 (FLKH…QQHT), 400–419 (KNTP…KKHV), and 483–507 (DLQI…ETSI). Residues 355 to 369 (SSPSSSTSLQEQTQQ) show a composition bias toward low complexity. Positions 400-413 (KNTPRTPVSDTQVP) are enriched in polar residues. The segment covering 483 to 492 (DLQIRKEASS) has biased composition (basic and acidic residues).

In terms of biological role, GTPase activator for the Rho-type GTPases by converting them to an inactive GDP-bound state. This is Rho GTPase-activating protein 19 (arhgap19) from Xenopus laevis (African clawed frog).